The following is a 258-amino-acid chain: MYQEERLVAILDFLKQHNRITTEQICTLLQVSRDTARRDLVKLEEQNAIIRTRGGAILPTVHQKIQSYSGRLKTVSEEKNKIGRLAASLIHDGDRVILDASTTVQACAKHLNAVDCTVITNSINLADVLSDKEGIEIYLLGGKLEKEHRFLYGSSVIEKLSSYHVDKALIGVVGISEHGITIAHEEDGMVKRKMIQQAKQVIALADHSKLGSTSFYQYAELNEIDLLITDRLPNQAFCDLLDRNGVELLVTEQDEGKD.

Positions 3–58 (QEERLVAILDFLKQHNRITTEQICTLLQVSRDTARRDLVKLEEQNAIIRTRGGAIL) constitute an HTH deoR-type domain. The H-T-H motif DNA-binding region spans 20 to 39 (ITTEQICTLLQVSRDTARRD).

Plays a role in carbon catabolite repression (CCR). Specifically required for transcriptional repression of the levanase operon by glucose but not by other sugars. The polypeptide is HTH-type transcriptional repressor GlcR (glcR) (Bacillus subtilis (strain 168)).